Reading from the N-terminus, the 165-residue chain is Fibrinogen-binding protein (165 aa).

A signal peptide spans 1–29; that stretch reads MKNKLIAKSLLTLAAIGITTTTIASTADA.

Interacts with host fibrinogen alpha chain/FGA. Interacts with host complement protein C3.

Its subcellular location is the secreted. Functionally, extracellular fibrinogen-binding protein that plays an important role in virulence. By interacting with the alpha chain of fibrinogen and its derivative fibrin, enhances a non-functional interaction between fibrinogen and platelets and is responsible for repression of fibrinogen-dependent platelet aggregation. In addition, assembles a fibrinogen protective shield around the bacteria which results in impaired phagocytic clearance by the host. Mechanistically, interacts with host complement C3b deposited on the surface of the bacterium via its C-terminal and then recruits fibrinogen via its N-terminal. The protein is Fibrinogen-binding protein (fib) of Staphylococcus aureus (strain Newman).